A 441-amino-acid chain; its full sequence is Ubiquitin carboxyl-terminal hydrolase MINDY-3 (441 aa).

The active-site Nucleophile is the Cys51. The active-site Proton acceptor is the His284.

It belongs to the MINDY deubiquitinase family. FAM188 subfamily.

Its subcellular location is the nucleus. It catalyses the reaction Thiol-dependent hydrolysis of ester, thioester, amide, peptide and isopeptide bonds formed by the C-terminal Gly of ubiquitin (a 76-residue protein attached to proteins as an intracellular targeting signal).. Functionally, hydrolase that can remove 'Lys-48'-linked conjugated ubiquitin from proteins. This is Ubiquitin carboxyl-terminal hydrolase MINDY-3 (mindy3) from Xenopus tropicalis (Western clawed frog).